The sequence spans 236 residues: Phosphoribosylaminoimidazole-succinocarboxamide synthase (236 aa).

Belongs to the SAICAR synthetase family.

The catalysed reaction is 5-amino-1-(5-phospho-D-ribosyl)imidazole-4-carboxylate + L-aspartate + ATP = (2S)-2-[5-amino-1-(5-phospho-beta-D-ribosyl)imidazole-4-carboxamido]succinate + ADP + phosphate + 2 H(+). Its pathway is purine metabolism; IMP biosynthesis via de novo pathway; 5-amino-1-(5-phospho-D-ribosyl)imidazole-4-carboxamide from 5-amino-1-(5-phospho-D-ribosyl)imidazole-4-carboxylate: step 1/2. This is Phosphoribosylaminoimidazole-succinocarboxamide synthase from Cellvibrio japonicus (strain Ueda107) (Pseudomonas fluorescens subsp. cellulosa).